The following is a 74-amino-acid chain: MKFWILLLTVSAHGIVVFLHVFGSLKEKPEEIEQCWVQPPARFCGRRCTKVQKCVSPNYTCCWTYCGNICLNNE.

The signal sequence occupies residues 1–19 (MKFWILLLTVSAHGIVVFL).

Its subcellular location is the secreted. The polypeptide is Protein WFDC9 (Wfdc9) (Rattus norvegicus (Rat)).